The sequence spans 355 residues: Peptide chain release factor 1 (355 aa).

The residue at position 231 (glutamine 231) is an N5-methylglutamine. Over residues 283–292 the composition is skewed to basic and acidic residues; the sequence is LAKETSERKS. The interval 283-306 is disordered; the sequence is LAKETSERKSQVGTGDRSGRIRTY.

The protein belongs to the prokaryotic/mitochondrial release factor family. Post-translationally, methylated by PrmC. Methylation increases the termination efficiency of RF1.

Its subcellular location is the cytoplasm. In terms of biological role, peptide chain release factor 1 directs the termination of translation in response to the peptide chain termination codons UAG and UAA. This is Peptide chain release factor 1 from Campylobacter concisus (strain 13826).